The sequence spans 146 residues: Small ribosomal subunit protein uS5 (146 aa).

The S5 DRBM domain occupies 8 to 71 (FKEVVVNIGR…DDAFKNIIKV (64 aa)).

Belongs to the universal ribosomal protein uS5 family. As to quaternary structure, part of the 30S ribosomal subunit. Contacts proteins S4 and S8.

In terms of biological role, with S4 and S12 plays an important role in translational accuracy. Functionally, located at the back of the 30S subunit body where it stabilizes the conformation of the head with respect to the body. The polypeptide is Small ribosomal subunit protein uS5 (Wolinella succinogenes (strain ATCC 29543 / DSM 1740 / CCUG 13145 / JCM 31913 / LMG 7466 / NCTC 11488 / FDC 602W) (Vibrio succinogenes)).